Here is a 166-residue protein sequence, read N- to C-terminus: Cytochrome P450 regulator dap1 (166 aa).

Residues threonine 4 to tryptophan 21 form a helical membrane-spanning segment. The 104-residue stretch at aspartate 42 to isoleucine 145 folds into the Cytochrome b5 heme-binding domain. Residue serine 108 is modified to Phosphoserine. Tyrosine 138 contributes to the heme binding site.

It belongs to the cytochrome b5 family. MAPR subfamily. In terms of assembly, interacts with erg5 and erg11.

It is found in the endoplasmic reticulum. The protein localises to the membrane. In terms of biological role, required for sterol biosynthesis. Functions as a positive regulator of cytochrome P450 enzymes erg5 and erg11. Function requires bound heme. The polypeptide is Cytochrome P450 regulator dap1 (dap1) (Schizosaccharomyces pombe (strain 972 / ATCC 24843) (Fission yeast)).